The sequence spans 654 residues: tRNA 5-methylaminomethyl-2-thiouridine biosynthesis bifunctional protein MnmC (654 aa).

Residues 1–235 (MSDFQHAQLD…KREMLGGTYQ (235 aa)) are tRNA (mnm(5)s(2)U34)-methyltransferase. Residues 261–654 (VGGGLAGCAS…LRDLVRGQRG (394 aa)) form an FAD-dependent cmnm(5)s(2)U34 oxidoreductase region.

It in the N-terminal section; belongs to the methyltransferase superfamily. tRNA (mnm(5)s(2)U34)-methyltransferase family. In the C-terminal section; belongs to the DAO family. Requires FAD as cofactor.

It is found in the cytoplasm. It carries out the reaction 5-aminomethyl-2-thiouridine(34) in tRNA + S-adenosyl-L-methionine = 5-methylaminomethyl-2-thiouridine(34) in tRNA + S-adenosyl-L-homocysteine + H(+). Catalyzes the last two steps in the biosynthesis of 5-methylaminomethyl-2-thiouridine (mnm(5)s(2)U) at the wobble position (U34) in tRNA. Catalyzes the FAD-dependent demodification of cmnm(5)s(2)U34 to nm(5)s(2)U34, followed by the transfer of a methyl group from S-adenosyl-L-methionine to nm(5)s(2)U34, to form mnm(5)s(2)U34. The protein is tRNA 5-methylaminomethyl-2-thiouridine biosynthesis bifunctional protein MnmC of Pseudomonas aeruginosa (strain UCBPP-PA14).